Consider the following 406-residue polypeptide: Renin (406 aa).

The first 23 residues, 1 to 23, serve as a signal peptide directing secretion; sequence MDGWRRMPRWGLLLLLWGSCTFG. A propeptide spans 24 to 66 (activation peptide); sequence LPTDTTTFKRIFLKRMPSIRESLKERGVDMARLGPEWSQPMKR. N-linked (GlcNAc...) asparagine glycosylation occurs at N71. One can recognise a Peptidase A1 domain in the interval 86–403; it reads YYGEIGIGTP…DRRNNRIGFA (318 aa). D104 is a catalytic residue. C117 and C124 are joined by a disulfide. N141 carries N-linked (GlcNAc...) asparagine glycosylation. C283 and C287 are disulfide-bonded. D292 is a catalytic residue. An intrachain disulfide couples C325 to C362.

The protein belongs to the peptidase A1 family. Interacts with ATP6AP2.

The protein localises to the secreted. Its subcellular location is the membrane. The enzyme catalyses Cleavage of Leu-|-Xaa bond in angiotensinogen to generate angiotensin I.. With respect to regulation, interaction with ATP6AP2 results in a 5-fold increased efficiency in angiotensinogen processing. In terms of biological role, renin is a highly specific endopeptidase, whose only known function is to generate angiotensin I from angiotensinogen in the plasma, initiating a cascade of reactions that produce an elevation of blood pressure and increased sodium retention by the kidney. This chain is Renin (REN), found in Macaca mulatta (Rhesus macaque).